We begin with the raw amino-acid sequence, 68 residues long: Large ribosomal subunit protein eL24 (68 aa).

Cys-7, Cys-10, Cys-33, and Cys-37 together coordinate Zn(2+). The C4-type zinc-finger motif lies at 7-37 (CSYCGREFEPGTGKMFVRNDGRVLFFCSSKC).

Belongs to the eukaryotic ribosomal protein eL24 family. Part of the 50S ribosomal subunit. Forms a cluster with proteins L3 and L14. Zn(2+) serves as cofactor.

Binds to the 23S rRNA. This Thermococcus onnurineus (strain NA1) protein is Large ribosomal subunit protein eL24.